Reading from the N-terminus, the 102-residue chain is Small ribosomal subunit protein uS10 (102 aa).

The protein belongs to the universal ribosomal protein uS10 family. Part of the 30S ribosomal subunit.

Functionally, involved in the binding of tRNA to the ribosomes. This chain is Small ribosomal subunit protein uS10, found in Paracoccus denitrificans (strain Pd 1222).